Reading from the N-terminus, the 338-residue chain is tRNA N6-adenosine threonylcarbamoyltransferase (338 aa).

His111 and His115 together coordinate Fe cation. Residues 134-138 (LVSGG), Asp167, Gly180, and Asn272 contribute to the substrate site. Asp300 contacts Fe cation.

Belongs to the KAE1 / TsaD family. The cofactor is Fe(2+).

The protein resides in the cytoplasm. The enzyme catalyses L-threonylcarbamoyladenylate + adenosine(37) in tRNA = N(6)-L-threonylcarbamoyladenosine(37) in tRNA + AMP + H(+). Functionally, required for the formation of a threonylcarbamoyl group on adenosine at position 37 (t(6)A37) in tRNAs that read codons beginning with adenine. Is involved in the transfer of the threonylcarbamoyl moiety of threonylcarbamoyl-AMP (TC-AMP) to the N6 group of A37, together with TsaE and TsaB. TsaD likely plays a direct catalytic role in this reaction. The sequence is that of tRNA N6-adenosine threonylcarbamoyltransferase from Vibrio parahaemolyticus serotype O3:K6 (strain RIMD 2210633).